Here is a 276-residue protein sequence, read N- to C-terminus: Putative pyruvate, phosphate dikinase regulatory protein (276 aa).

Residue 150–157 (GVSRTSKT) coordinates ADP.

It belongs to the pyruvate, phosphate/water dikinase regulatory protein family. PDRP subfamily.

The catalysed reaction is N(tele)-phospho-L-histidyl/L-threonyl-[pyruvate, phosphate dikinase] + ADP = N(tele)-phospho-L-histidyl/O-phospho-L-threonyl-[pyruvate, phosphate dikinase] + AMP + H(+). It carries out the reaction N(tele)-phospho-L-histidyl/O-phospho-L-threonyl-[pyruvate, phosphate dikinase] + phosphate + H(+) = N(tele)-phospho-L-histidyl/L-threonyl-[pyruvate, phosphate dikinase] + diphosphate. Functionally, bifunctional serine/threonine kinase and phosphorylase involved in the regulation of the pyruvate, phosphate dikinase (PPDK) by catalyzing its phosphorylation/dephosphorylation. This Lacticaseibacillus casei (strain BL23) (Lactobacillus casei) protein is Putative pyruvate, phosphate dikinase regulatory protein.